We begin with the raw amino-acid sequence, 485 residues long: NADH-quinone oxidoreductase subunit N (485 aa).

The next 14 helical transmembrane spans lie at 8-28, 35-55, 71-91, 105-125, 127-147, 159-179, 203-223, 235-255, 271-291, 297-317, 326-346, 373-393, 408-430, and 455-475; these read LIAL…MLSI, FLNA…LWFV, GFAM…CTFA, FYLL…ANHL, ALFL…GYAF, YTIL…LVYA, LLAG…LVPF, PAPV…GVVM, VVLG…ALSQ, LLGY…IALQ, VGVY…VVSL, AAVM…LGFI, WWLV…RVAV, and IVVL…QPLI.

It belongs to the complex I subunit 2 family. As to quaternary structure, NDH-1 is composed of 13 different subunits. Subunits NuoA, H, J, K, L, M, N constitute the membrane sector of the complex.

Its subcellular location is the cell inner membrane. It catalyses the reaction a quinone + NADH + 5 H(+)(in) = a quinol + NAD(+) + 4 H(+)(out). Its function is as follows. NDH-1 shuttles electrons from NADH, via FMN and iron-sulfur (Fe-S) centers, to quinones in the respiratory chain. The immediate electron acceptor for the enzyme in this species is believed to be ubiquinone. Couples the redox reaction to proton translocation (for every two electrons transferred, four hydrogen ions are translocated across the cytoplasmic membrane), and thus conserves the redox energy in a proton gradient. This Salmonella arizonae (strain ATCC BAA-731 / CDC346-86 / RSK2980) protein is NADH-quinone oxidoreductase subunit N.